The sequence spans 137 residues: Nucleoside diphosphate kinase (137 aa).

Positions 9, 57, 85, 91, 102, and 112 each coordinate ATP. The active-site Pros-phosphohistidine intermediate is His115.

It belongs to the NDK family. In terms of assembly, homotetramer. It depends on Mg(2+) as a cofactor.

It localises to the cytoplasm. It catalyses the reaction a 2'-deoxyribonucleoside 5'-diphosphate + ATP = a 2'-deoxyribonucleoside 5'-triphosphate + ADP. The enzyme catalyses a ribonucleoside 5'-diphosphate + ATP = a ribonucleoside 5'-triphosphate + ADP. In terms of biological role, major role in the synthesis of nucleoside triphosphates other than ATP. The ATP gamma phosphate is transferred to the NDP beta phosphate via a ping-pong mechanism, using a phosphorylated active-site intermediate. The sequence is that of Nucleoside diphosphate kinase from Campylobacter jejuni subsp. jejuni serotype O:2 (strain ATCC 700819 / NCTC 11168).